The primary structure comprises 183 residues: Efficient mitochondria targeting-associated protein 19 (183 aa).

Residues 1–25 lie on the Cytoplasmic side of the membrane; that stretch reads MKVVSLRRIYSSEIYKLPTTRLHMD. Residues 24–156 enclose the EXPERA domain; sequence MDTLYYYYFV…PYLAIPLWMA (133 aa). A helical transmembrane segment spans residues 26–46; sequence TLYYYYFVSHLAAALFVDLPI. At 47-81 the chain is on the lumenal side; sequence TEWLGGSLSCLSGLRRFYLSTYEDPILLIPAPWKT. A helical transmembrane segment spans residues 82–102; that stretch reads ALFSSELFFQVPFFIWVSLRL. Topologically, residues 103–110 are cytoplasmic; the sequence is RKKARDPV. The chain crosses the membrane as a helical span at residues 111–131; that stretch reads LWVAILIYGVHAFTTTWCCMF. Topologically, residues 132–138 are lumenal; it reads ELFAEKK. A helical membrane pass occupies residues 139–159; that stretch reads WMIMSFYFPYLAIPLWMAIDM. The Cytoplasmic segment spans residues 160–183; that stretch reads GGRLVKSCHAAKSGPSSTITSKSD.

This sequence belongs to the TMEM97/sigma-2 receptor family.

It is found in the endoplasmic reticulum membrane. Part of an import route for newly synthesized mitochondrial proteins termed the ER-SURF pathway (ER surface-mediated protein targeting), which retrieves mitochondrial precursor proteins from the ER surface and reroutes them to mitochondria for efficient mitochondrial import. Acts as a quality control factor in the ER, promoting the proteolytic degradation of nonproductive and extramitochondrial precursor proteins in the ER membrane thus removing them from the ER surface. The protein is Efficient mitochondria targeting-associated protein 19 (ema19) of Schizosaccharomyces pombe (strain 972 / ATCC 24843) (Fission yeast).